The primary structure comprises 448 residues: MIKIRKGLDLPIAGAPRQAIEEGHQVRSVAVLGGDYVGMKPTMEVREGDVVKKGQLIFTDKKTEGVKYTSPAAGKVIAINRGHKRVLQSVVIEVADQEDEVTFASYSADQLRSLDRDAVQQQLVDSGEWTLLRTRPFGKVPAPGSTPNSVFVSILDTNPLALDPAVVIKENEQAFRHGLTVLSRLTDGPVWVCRGPNTDLPSFAGGQVREEAFSGKHPAGNVGTHIHYLDPVGLNKTVWSVGYQDVIAIGKLFTEGKISSARVVALTGPQAKTPRALRTRVGASVDDFAQGELKEGDNRLISGSVLNGHNARGPVAWLSRTTNQLTALREGHERELLGYISPGANRFSLMNIYLSKLMPGKRFNFTTTTNGSERAMVPVGAYEEVMPLDILPTQLLRALIVGDTDSATALGALELLEEDLSLCTFVCPGKYEYGPILRDNLTTIEAEG.

It belongs to the NqrA family. As to quaternary structure, composed of six subunits; NqrA, NqrB, NqrC, NqrD, NqrE and NqrF.

The catalysed reaction is a ubiquinone + n Na(+)(in) + NADH + H(+) = a ubiquinol + n Na(+)(out) + NAD(+). In terms of biological role, NQR complex catalyzes the reduction of ubiquinone-1 to ubiquinol by two successive reactions, coupled with the transport of Na(+) ions from the cytoplasm to the periplasm. NqrA to NqrE are probably involved in the second step, the conversion of ubisemiquinone to ubiquinol. The sequence is that of Na(+)-translocating NADH-quinone reductase subunit A from Alcanivorax borkumensis (strain ATCC 700651 / DSM 11573 / NCIMB 13689 / SK2).